We begin with the raw amino-acid sequence, 245 residues long: MVAASGTQRTRTVGLARWIVYAGSVFAGAWLATQLFYLVQIALWSFINPGSTAFMRTDAWWLSHDKPPAQIQHQWVPYDQISRNLKRALIASEDATFATNNGYDVDAILQAWEKNKARGHIVAGGSTITQQLARNLFLSREKSYIRKGQELIITWMLETVLDKERIFEIYLNSVEWGRGVYGAEAAARYYYRIPASRLGAWQSARLAVMLPKPRWFDAHRGSAYQAQRAAVIARRMGAAELPQSQ.

A helical transmembrane segment spans residues 13–35; sequence VGLARWIVYAGSVFAGAWLATQL.

This sequence belongs to the glycosyltransferase 51 family.

It is found in the cell inner membrane. It catalyses the reaction [GlcNAc-(1-&gt;4)-Mur2Ac(oyl-L-Ala-gamma-D-Glu-L-Lys-D-Ala-D-Ala)](n)-di-trans,octa-cis-undecaprenyl diphosphate + beta-D-GlcNAc-(1-&gt;4)-Mur2Ac(oyl-L-Ala-gamma-D-Glu-L-Lys-D-Ala-D-Ala)-di-trans,octa-cis-undecaprenyl diphosphate = [GlcNAc-(1-&gt;4)-Mur2Ac(oyl-L-Ala-gamma-D-Glu-L-Lys-D-Ala-D-Ala)](n+1)-di-trans,octa-cis-undecaprenyl diphosphate + di-trans,octa-cis-undecaprenyl diphosphate + H(+). It functions in the pathway cell wall biogenesis; peptidoglycan biosynthesis. Its function is as follows. Peptidoglycan polymerase that catalyzes glycan chain elongation from lipid-linked precursors. This is Biosynthetic peptidoglycan transglycosylase from Burkholderia vietnamiensis (strain G4 / LMG 22486) (Burkholderia cepacia (strain R1808)).